Consider the following 389-residue polypeptide: Succinate--CoA ligase [ADP-forming] subunit beta (389 aa).

An ATP-grasp domain is found at Lys9–Glu244. Residues Lys46, Gly53 to Gly55, Glu99, Ala102, and Glu107 contribute to the ATP site. Residues Asn199 and Asp213 each coordinate Mg(2+). Substrate contacts are provided by residues Asn264 and Gly321–Met323.

Belongs to the succinate/malate CoA ligase beta subunit family. As to quaternary structure, heterotetramer of two alpha and two beta subunits. Requires Mg(2+) as cofactor.

It carries out the reaction succinate + ATP + CoA = succinyl-CoA + ADP + phosphate. The enzyme catalyses GTP + succinate + CoA = succinyl-CoA + GDP + phosphate. It participates in carbohydrate metabolism; tricarboxylic acid cycle; succinate from succinyl-CoA (ligase route): step 1/1. In terms of biological role, succinyl-CoA synthetase functions in the citric acid cycle (TCA), coupling the hydrolysis of succinyl-CoA to the synthesis of either ATP or GTP and thus represents the only step of substrate-level phosphorylation in the TCA. The beta subunit provides nucleotide specificity of the enzyme and binds the substrate succinate, while the binding sites for coenzyme A and phosphate are found in the alpha subunit. This chain is Succinate--CoA ligase [ADP-forming] subunit beta, found in Paraburkholderia phytofirmans (strain DSM 17436 / LMG 22146 / PsJN) (Burkholderia phytofirmans).